We begin with the raw amino-acid sequence, 374 residues long: MAAMRAHARRRHPHALMSRAAGLPRLSWFAGLTWFAGGSTGAGCAAHPALAGLTAGARCPAYAAISASTARPAATALPAVAASTARPAATAGTTPATGASGSARPTDAAGMADLARPGVVATHAVRTLGTTGSRAIGLCPSQPLDCPRSPQATLNLGSMGRSLDGPQWRRARVRLCGRWWRRSNTTRGASPRPPSTCRGDNVSMIELEVHQADVTKLELDAITNAANTRLRHAGGVAAAIARAGGPELQRESTEKAPIGLGEAVETTAGDMPARYVIHAATMELGGPTSGEIITAATAATLRKADELGCRSLALVAFGTGVGGFPLDDAARLMVGAVRRHRPGSLQRVVFAVHGDAAERAFSAAIQAGEDTARR.

Over residues 86–104 the composition is skewed to low complexity; that stretch reads RPAATAGTTPATGASGSAR. The tract at residues 86-109 is disordered; the sequence is RPAATAGTTPATGASGSARPTDAA. Positions 179 to 354 constitute a Macro domain; sequence WWRRSNTTRG…LQRVVFAVHG (176 aa).

This is an uncharacterized protein from Mycobacterium tuberculosis (strain CDC 1551 / Oshkosh).